Reading from the N-terminus, the 190-residue chain is Imidazoleglycerol-phosphate dehydratase (190 aa).

It belongs to the imidazoleglycerol-phosphate dehydratase family.

The protein localises to the cytoplasm. The enzyme catalyses D-erythro-1-(imidazol-4-yl)glycerol 3-phosphate = 3-(imidazol-4-yl)-2-oxopropyl phosphate + H2O. The protein operates within amino-acid biosynthesis; L-histidine biosynthesis; L-histidine from 5-phospho-alpha-D-ribose 1-diphosphate: step 6/9. The protein is Imidazoleglycerol-phosphate dehydratase of Aliarcobacter butzleri (strain RM4018) (Arcobacter butzleri).